The primary structure comprises 61 residues: 2S seed storage albumin protein (61 aa).

It belongs to the 2S seed storage albumins family. The mature protein consists of a small and a large chain linked by 2 disulfide bonds.

Its function is as follows. This is a 2S seed storage protein. Inhibits cell-free protein synthesis. The chain is 2S seed storage albumin protein from Cucurbita moschata (Winter crookneck squash).